Here is a 401-residue protein sequence, read N- to C-terminus: Putative F-box/FBD/LRR-repeat protein At3g23955 (401 aa).

One can recognise an F-box domain in the interval 56–102 (VPARFQLPDPLLTQILNHLPTEEAVKTSVLSTRWRTLWLWVHNLELS). 2 LRR repeats span residues 128-152 (IESL…AFVK) and 275-296 (MSSL…FLRS). The region spanning 321-373 (IKRVSISSVPECLLSSLEFVEFKAPICGLAPEMMLVWYFLENSPTLKKLTLRL) is the FBD domain.

This is Putative F-box/FBD/LRR-repeat protein At3g23955 from Arabidopsis thaliana (Mouse-ear cress).